The following is a 538-amino-acid chain: Putative outer membrane porin BglH (538 aa).

The first 25 residues, 1-25 (MFRRNLITSAILLMAPLAFSAQSLA), serve as a signal peptide directing secretion. The tract at residues 52-82 (KDEEKKKYTPATVNRSVSTNDQGYAANPFPT) is disordered. The segment covering 62-73 (ATVNRSVSTNDQ) has biased composition (polar residues).

The protein belongs to the porin LamB (TC 1.B.3) family.

It is found in the cell outer membrane. In terms of biological role, may be a sugar porin with a broad carbohydrate specificity. In Shigella flexneri serotype 5b (strain 8401), this protein is Putative outer membrane porin BglH (bglH).